A 619-amino-acid polypeptide reads, in one-letter code: MALLQIAEPGQSAAPHQHRLAVGIDLGTTNSLVAAVRSAQALTLPDEQGRHSLPSVVHYGETNVLVGYEAQDKSALDPQNTIVSVKRFMGRSLTDIQSGVHRLPYELHASENGLPVFTTPMGQVNPIQVSAEILKPLIARAETTLGGELAGVVITVPAYFDDAQRQGTKDAAELLGVKVLRLLNEPTAAAIAYGLDSKQEGVIAIYDLGGGTFDISVLRLNRGVFEVLATGGDSALGGDDFDHLLVSHLQQAWQITEPGSQLARQLLIEARRVKEALTDNDSVEASVVMADKTLTCTVDKSLFNELIGALVKKTIGCCRRTLRDAGVSVDDVIETVMVGGSTRVPLVREQVETFFKKTPLTSIDPDRVVAIGAAIQADILVGNKPESDLLLLDVIPLSLGVETMGGLVEKVVTRNTTIPVARAQEFTTFKDGQTAMAFHVVQGERELVEDCRSLARFTLHGIPPLAAGAAHIRVTFQVDADGLLSVTAMEKSTGVNTSIQVKPSFGLSDTEIATMLKDSMKYAKDDITRRMLAEQKVEAARVIESLNAALAKDAALLDEQEREELVVAIAQLDAVAQQDNIDAIEKAIANLDDKTQDFASRRMDNSIRAALKGQSVDNI.

Belongs to the heat shock protein 70 family.

Functionally, chaperone involved in the maturation of iron-sulfur cluster-containing proteins. Has a low intrinsic ATPase activity which is markedly stimulated by HscB. In Shewanella frigidimarina (strain NCIMB 400), this protein is Chaperone protein HscA homolog.